The chain runs to 408 residues: S-adenosylmethionine synthase (408 aa).

Residue 140–145 (GQGSVD) participates in ATP binding.

The protein belongs to the AdoMet synthase 2 family. The cofactor is Mg(2+).

The catalysed reaction is L-methionine + ATP + H2O = S-adenosyl-L-methionine + phosphate + diphosphate. It functions in the pathway amino-acid biosynthesis; S-adenosyl-L-methionine biosynthesis; S-adenosyl-L-methionine from L-methionine: step 1/1. In terms of biological role, catalyzes the formation of S-adenosylmethionine from methionine and ATP. This is S-adenosylmethionine synthase from Caldivirga maquilingensis (strain ATCC 700844 / DSM 13496 / JCM 10307 / IC-167).